We begin with the raw amino-acid sequence, 346 residues long: tRNA N6-adenosine threonylcarbamoyltransferase (346 aa).

The Fe cation site is built by His-111 and His-115. Residues 134-138 (LVSGG), Asp-167, Gly-180, and Asn-279 contribute to the substrate site. A Fe cation-binding site is contributed by Asp-307.

It belongs to the KAE1 / TsaD family. Fe(2+) serves as cofactor.

The protein localises to the cytoplasm. The enzyme catalyses L-threonylcarbamoyladenylate + adenosine(37) in tRNA = N(6)-L-threonylcarbamoyladenosine(37) in tRNA + AMP + H(+). Required for the formation of a threonylcarbamoyl group on adenosine at position 37 (t(6)A37) in tRNAs that read codons beginning with adenine. Is involved in the transfer of the threonylcarbamoyl moiety of threonylcarbamoyl-AMP (TC-AMP) to the N6 group of A37, together with TsaE and TsaB. TsaD likely plays a direct catalytic role in this reaction. The polypeptide is tRNA N6-adenosine threonylcarbamoyltransferase (Burkholderia lata (strain ATCC 17760 / DSM 23089 / LMG 22485 / NCIMB 9086 / R18194 / 383)).